We begin with the raw amino-acid sequence, 329 residues long: 4-hydroxythreonine-4-phosphate dehydrogenase (329 aa).

Substrate contacts are provided by histidine 136 and threonine 137. Histidine 166, histidine 211, and histidine 266 together coordinate a divalent metal cation. 3 residues coordinate substrate: lysine 274, asparagine 283, and arginine 292.

This sequence belongs to the PdxA family. Homodimer. Requires Zn(2+) as cofactor. The cofactor is Mg(2+). Co(2+) serves as cofactor.

The protein localises to the cytoplasm. The enzyme catalyses 4-(phosphooxy)-L-threonine + NAD(+) = 3-amino-2-oxopropyl phosphate + CO2 + NADH. Its pathway is cofactor biosynthesis; pyridoxine 5'-phosphate biosynthesis; pyridoxine 5'-phosphate from D-erythrose 4-phosphate: step 4/5. Its function is as follows. Catalyzes the NAD(P)-dependent oxidation of 4-(phosphooxy)-L-threonine (HTP) into 2-amino-3-oxo-4-(phosphooxy)butyric acid which spontaneously decarboxylates to form 3-amino-2-oxopropyl phosphate (AHAP). The polypeptide is 4-hydroxythreonine-4-phosphate dehydrogenase (Salmonella typhimurium (strain LT2 / SGSC1412 / ATCC 700720)).